A 146-amino-acid chain; its full sequence is Large ribosomal subunit protein uL15 (146 aa).

The disordered stretch occupies residues 1 to 51; sequence MKLHELQPAPGSRKERNRVGRGIGSGNGKTSGKGHKGQNARSGGGVRIGFE. 2 stretches are compositionally biased toward gly residues: residues 21–31 and 42–51; these read RGIGSGNGKTS and SGGGVRIGFE.

The protein belongs to the universal ribosomal protein uL15 family. As to quaternary structure, part of the 50S ribosomal subunit.

Its function is as follows. Binds to the 23S rRNA. The chain is Large ribosomal subunit protein uL15 from Anoxybacillus flavithermus (strain DSM 21510 / WK1).